The following is a 338-amino-acid chain: Phosphate acyltransferase (338 aa).

The protein belongs to the PlsX family. As to quaternary structure, homodimer. Probably interacts with PlsY.

The protein localises to the cytoplasm. It carries out the reaction a fatty acyl-[ACP] + phosphate = an acyl phosphate + holo-[ACP]. Its pathway is lipid metabolism; phospholipid metabolism. In terms of biological role, catalyzes the reversible formation of acyl-phosphate (acyl-PO(4)) from acyl-[acyl-carrier-protein] (acyl-ACP). This enzyme utilizes acyl-ACP as fatty acyl donor, but not acyl-CoA. The polypeptide is Phosphate acyltransferase (Mannheimia succiniciproducens (strain KCTC 0769BP / MBEL55E)).